Reading from the N-terminus, the 1803-residue chain is 6-methylsalicylic acid synthase (1803 aa).

The segment at 1–40 (MEVHGDEVLSVDSGVSTPPSTGSGFRRPLETPGTEIGNLN) is disordered. The span at 13–24 (SGVSTPPSTGSG) shows a compositional bias: low complexity. The Ketosynthase family 3 (KS3) domain maps to 44–470 (QNEVAVVGMA…GTVSHAIIEE (427 aa)). Catalysis depends on for beta-ketoacyl synthase activity residues C216, H351, and H391. In terms of domain architecture, Malonyl-CoA:ACP transacylase (MAT) spans 581 to 894 (VWVFSGHGAQ…SIAQLHCRGA (314 aa)). The active-site For malonyltransferase activity is S667. The tract at residues 940-1058 (HTLLGQRVPV…GQWEAGGSKN (119 aa)) is N-terminal hotdog fold. A PKS/mFAS DH domain is found at 940–1218 (HTLLGQRVPV…FSEIEGTPGS (279 aa)). H972 (proton acceptor; for thioesterase activity) is an active-site residue. The C-terminal hotdog fold stretch occupies residues 1073–1218 (ANNKLADNFS…FSEIEGTPGS (146 aa)). D1129 (proton donor; for thioesterase activity) is an active-site residue. Residues 1141-1262 (TSVGSTLFFD…KNVADLYCGS (122 aa)) form a required for homotetramer formation region. The Ketoreductase (KR) domain occupies 1434 to 1628 (STYLITGGLG…AVAVQWTSWR (195 aa)). A compositionally biased stretch (low complexity) spans 1701–1710 (ASSADAPSAA). The disordered stretch occupies residues 1701–1721 (ASSADAPSAAPKETNEMPESI). Residues 1726–1801 (TWLDERIRDC…HLVGWFLEKM (76 aa)) form the Carrier domain. S1761 carries the O-(pantetheine 4'-phosphoryl)serine modification. The required for catalytic activity stretch occupies residues 1783–1803 (LTWSCPTVSHLVGWFLEKMGN).

As to quaternary structure, homotetramer.

It catalyses the reaction 3 malonyl-CoA + acetyl-CoA + NADPH + 3 H(+) = 6-methylsalicylate + 3 CO2 + NADP(+) + 4 CoA + H2O. It functions in the pathway secondary metabolite biosynthesis. 6-methylsalicylic acid synthase; part of the gene cluster that mediates the biosynthesis of terreic acid, a quinone epoxide inhibitor of Bruton's tyrosine kinase. The first step of the pathway is the synthesis of 6-methylsalicylic acid (6-MSA) by the 6-methylsalicylic acid synthase atX. In the biosynthesis of 6-MSA, atX utilizes one acetyl-CoA and three malonyl-CoAs as its substrates and catalyzes a series of programmed reactions including Claisen condensation, reduction, aldol cyclization, and the hydrolytic cleavage that yields 6-MSA. The 6-methylsalicylate 1-monooxygenase atA then catalyzes the decarboxylative hydroxylation of 6-MSA to 3-methylcatechol. The next step is the conversion of 3-methylcatechol to 3-methyl-1,2,4-benzenetriol by cytochrome P450 monooxygenase atE, which is enhanced by cytochrome P450 monooxygenase atG. Then, the epoxidase atD catalyzes the epoxidation and hydroxyl oxidation of 3-methyl-1,2,4-benzenetriol to terremutin. Lastly, GMC oxidoreductase atC oxidizes terremutin to terreic acid. This is 6-methylsalicylic acid synthase from Aspergillus terreus (strain NIH 2624 / FGSC A1156).